A 237-amino-acid chain; its full sequence is Chaplin-B (237 aa).

Positions 1-26 (MRRVTRNGVLAVAASGALAVTMPAYA) are cleaved as a signal peptide. One can recognise a Chaplin 1 domain in the interval 42–82 (SPGLISGNTVQLPVDVPVDVCGNTVNVVGLLNPAAGNGCAD). Disordered stretches follow at residues 81 to 127 (ADSG…LSGN) and 148 to 216 (GIGN…TLAG). Positions 101–115 (GSATEATSGGAAAEG) are enriched in low complexity. Residues 120 to 160 (SPGVLSGNGVQLPVHLPVNVSGNSVNVVGIGNPAVGNESTN) form the Chaplin 2 domain. A compositionally biased stretch (pro residues) spans 169–178 (VRPPAEPEPS). Residues 202–206 (LAHTG) carry the LPXTG sorting signal motif. At T205 the chain carries Pentaglycyl murein peptidoglycan amidated threonine. A propeptide spans 206–237 (GTDRTLPTLAGGAALVLGGTVLYRRFRPGSGD) (removed by sortase).

This sequence belongs to the chaplin family. Long chaplin subfamily.

The protein resides in the secreted. It is found in the cell wall. In terms of biological role, one of 8 partially redundant surface-active proteins required for efficient formation of aerial mycelium; the short chaplins assemble into a hydrophobic, amyloidal fibrillar surface layer that envelopes and protects aerial hyphae and spores, presumably anchored to the long chaplins. Chaplins have an overlapping function with the surface-active SapB peptide; chaplins are essential on minimal medium while on rich medium both chaplins and SapB are required for efficient aerial hyphae formation. The long chaplins (ChpA, ChpB, ChpC) are not absolutely necessary for short chaplin localization or rodlet formation, but probably play a role in initiating aerial hyphae development. Chaplins are also involved in cell attachment to a hydrophobic surface. This Streptomyces coelicolor (strain ATCC BAA-471 / A3(2) / M145) protein is Chaplin-B.